The sequence spans 494 residues: Chromosomal replication initiator protein DnaA (494 aa).

Positions 1 to 103 (MTTDPDPPFV…PVSDESDSGS (103 aa)) are domain I, interacts with DnaA modulators. Residues 94 to 117 (PVSDESDSGSVASPAPVAAADPDD) form a disordered region. Positions 101–113 (SGSVASPAPVAAA) are enriched in low complexity. The tract at residues 104–153 (VASPAPVAAADPDDDVVDDDLAARASAEESWPSYFTNRANRAAEDDATSV) is domain II. Positions 154–370 (NLNRRYTFDT…GALIRVTAFA (217 aa)) are domain III, AAA+ region. Positions 198, 200, 201, and 202 each coordinate ATP. Residues 371-494 (SLNKTPIDKS…TTRIRQRAKR (124 aa)) form a domain IV, binds dsDNA region.

It belongs to the DnaA family. As to quaternary structure, oligomerizes as a right-handed, spiral filament on DNA at oriC.

The protein resides in the cytoplasm. Its function is as follows. Plays an essential role in the initiation and regulation of chromosomal replication. ATP-DnaA binds to the origin of replication (oriC) to initiate formation of the DNA replication initiation complex once per cell cycle. Binds the DnaA box (a 9 base pair repeat at the origin) and separates the double-stranded (ds)DNA. Forms a right-handed helical filament on oriC DNA; dsDNA binds to the exterior of the filament while single-stranded (ss)DNA is stabiized in the filament's interior. The ATP-DnaA-oriC complex binds and stabilizes one strand of the AT-rich DNA unwinding element (DUE), permitting loading of DNA polymerase. After initiation quickly degrades to an ADP-DnaA complex that is not apt for DNA replication. Binds acidic phospholipids. This Mycolicibacterium vanbaalenii (strain DSM 7251 / JCM 13017 / BCRC 16820 / KCTC 9966 / NRRL B-24157 / PYR-1) (Mycobacterium vanbaalenii) protein is Chromosomal replication initiator protein DnaA.